The following is a 469-amino-acid chain: Zinc transporter SLC39A7 (469 aa).

The helical transmembrane segment at 10-30 threads the bilayer; it reads WVAVGLLTWATLGLLVAELGG. Composition is skewed to basic and acidic residues over residues 42-56 and 66-114; these read FHGHSHRHSHEDFHH and HTHE…EHSR. Residues 42–121 are disordered; the sequence is FHGHSHRHSH…HSRGGYGESG (80 aa). His66 carries the post-translational modification Pros-methylhistidine. Helical transmembrane passes span 138–158, 169–189, and 214–234; these read ALGATVLISAAPFFVLFLIPV, LQILLSFASGGLLGDAFLHLI, and GPILSVGLWVLSGIVAFLVVE. Over residues 242-263 the composition is skewed to basic residues; sequence GGHGHSHGHGHAHSHTHGSHGH. The segment at 242–310 is disordered; the sequence is GGHGHSHGHG…VRPQNAEEEK (69 aa). Over residues 264-285 the composition is skewed to basic and acidic residues; it reads GRQECSTKEKQSSEEEEKETRG. Phosphoserine occurs at positions 275 and 276. 3 helical membrane passes run 386 to 406, 410 to 430, and 448 to 468; these read LTAVGALAGTACALLTEGGAV, IAGGAGPGWVLPFTAGGFIYV, and SLLEVLGLLGGVVMMVLIAHL.

The protein belongs to the ZIP transporter (TC 2.A.5) family. KE4/Catsup subfamily. In terms of assembly, homodimer. Methylation at some His residue by METTL9 leads to reduced zinc-binding. In terms of processing, rapidly phosphorylated by CK2 following Zn(2+) treatment. This phosphorylation is required for efficient cytosolic Zn(2+) release.

It localises to the endoplasmic reticulum membrane. Its subcellular location is the golgi apparatus. The protein resides in the cis-Golgi network membrane. It catalyses the reaction Zn(2+)(in) = Zn(2+)(out). Its function is as follows. Transports Zn(2+) from the endoplasmic reticulum (ER)/Golgi apparatus to the cytosol, playing an essential role in the regulation of cytosolic zinc levels. Acts as a gatekeeper of zinc release from intracellular stores, requiring post-translational activation by phosphorylation, resulting in activation of multiple downstream pathways leading to cell growth and proliferation. Has an essential role in B cell development and is required for proper B cell receptor signaling. Plays an important role in maintaining intestinal epithelial homeostasis and skin dermis development by regulating ER function. Controls cell signaling pathways involved in glucose metabolism in skeletal muscle. Has a protective role against ER stress in different biological contexts. Mediates Zn(2+)-induced ferroptosis. In Pongo abelii (Sumatran orangutan), this protein is Zinc transporter SLC39A7.